We begin with the raw amino-acid sequence, 354 residues long: Uroporphyrinogen decarboxylase (354 aa).

Substrate is bound by residues 27–31 (RQAGR), Asp77, Tyr154, Ser209, and His327.

It belongs to the uroporphyrinogen decarboxylase family. Homodimer.

It localises to the cytoplasm. The enzyme catalyses uroporphyrinogen III + 4 H(+) = coproporphyrinogen III + 4 CO2. It functions in the pathway porphyrin-containing compound metabolism; protoporphyrin-IX biosynthesis; coproporphyrinogen-III from 5-aminolevulinate: step 4/4. In terms of biological role, catalyzes the decarboxylation of four acetate groups of uroporphyrinogen-III to yield coproporphyrinogen-III. The polypeptide is Uroporphyrinogen decarboxylase (Shewanella pealeana (strain ATCC 700345 / ANG-SQ1)).